Reading from the N-terminus, the 113-residue chain is Protein C21/B27 (113 aa).

The chain is Protein C21/B27 from Homo sapiens (Human).